Here is a 546-residue protein sequence, read N- to C-terminus: MAAKDVKFGDSARKKMLVGVNVLADAVKATLGPKGRNVVLAKSFGAPTITKDGVSVAKEIELKDAFENMGAQLVKEVASKANDAAGDGTTTATVLAQAIVNEGLKAVAAGMNPMDLKRGIDKATAAVVAELKNLSKPCADSKAIAQVGTISANSDNSIGEIIAEAMEKVGKEGVITVEEGSGLENELSVVEGMQFDRGYLSPYFVNKPDTMVAELEGPLLLLVDKKISNIRELLPVLEAVAKAGRPLLIVAEDVEGEALATLVVNNMRGIVKVAAVKAPGFGDRRKAMLQDIAVLTGGQVISEEIGLSLETATLEHLGNAKRVILSKENTTIIDGAGADTEIEARVKQIRAQIEETSSDYDREKLQERLAKLAGGVAVIKVGAGTEVEMKEKKARVEDALHATRAAVEEGVVPGGGVALVRALAAIIDLKGDNEDQNVGIALLRRAVESPLRQITANAGDEPSVVADKVKQGSGNFGYNAATGEYGDMIEMGILDPAKVTRSALQAAASIGGLMITTEAMVADLPEDKPAAGMPDMGGMGGMGGMM.

ATP-binding positions include 30–33 (TLGP), K51, 87–91 (DGTTT), G415, 479–481 (NAA), and D495.

This sequence belongs to the chaperonin (HSP60) family. As to quaternary structure, forms a cylinder of 14 subunits composed of two heptameric rings stacked back-to-back. Interacts with the co-chaperonin GroES.

It localises to the cytoplasm. It catalyses the reaction ATP + H2O + a folded polypeptide = ADP + phosphate + an unfolded polypeptide.. Its function is as follows. Together with its co-chaperonin GroES, plays an essential role in assisting protein folding. The GroEL-GroES system forms a nano-cage that allows encapsulation of the non-native substrate proteins and provides a physical environment optimized to promote and accelerate protein folding. This chain is Chaperonin GroEL, found in Pseudomonas putida (strain ATCC 47054 / DSM 6125 / CFBP 8728 / NCIMB 11950 / KT2440).